We begin with the raw amino-acid sequence, 224 residues long: Extracellular protease inhibitor 10 (224 aa).

A signal peptide spans 1–22; the sequence is MKSAFTLSLALVAVTATISAAA. Kazal-like domains are found at residues 23–72, 90–127, and 156–210; these read DDNC…ECAS, TSGT…AKCK, and GYQG…PCPS. N25 carries an N-linked (GlcNAc...) asparagine glycan. 3 disulfide bridges follow: C26-C56, C30-C49, and C38-C70. Residues 69–92 form a disordered region; it reads ECASTPASSATPSPVTSSTGSTSG. The span at 71–92 shows a compositional bias: low complexity; the sequence is ASTPASSATPSPVTSSTGSTSG. 5 disulfide bridges follow: C96/C126, C100/C119, C162/C193, C167/C186, and C175/C208. An N-linked (GlcNAc...) asparagine glycan is attached at N199. Residues 202 to 224 form a disordered region; the sequence is MVGEGPCPSQEQQQQQQQQQQKL. Residues 211-224 show a composition bias toward low complexity; it reads QEQQQQQQQQQQKL.

Interacts with host subtilisin-like protease P69B.

It localises to the secreted. Functionally, secreted effector that interacts with and inhibits the pathogenesis-related P69B subtilisin-like serine protease of host tomato. Inhibition of host proteases by a pathogen extracellular protease inhibitor forms a specific type of defense-counterdefense mechanism between plants and microbial pathogens. The chain is Extracellular protease inhibitor 10 from Phytophthora infestans (Potato late blight agent).